We begin with the raw amino-acid sequence, 1006 residues long: Phosphatidylinositol-3,5-bisphosphate 3-phosphatase MTMR3 (1006 aa).

Low complexity predominate over residues 1 to 10 (MTVTSSAAID). Residues 1 to 29 (MTVTSSAAIDIGGGGGGRRSDRLDSDRTS) are disordered. The span at 18-29 (RRSDRLDSDRTS) shows a compositional bias: basic and acidic residues. Residues 224–630 (AWKFSEAVDE…INLRVWHEVF (407 aa)) enclose the Myotubularin phosphatase domain. A 1,2-diacyl-sn-glycero-3-phospho-(1D-myo-inositol-3,5-bisphosphate) is bound by residues asparagine 377, asparagine 402, and isoleucine 403. 3 residues coordinate a 1,2-diacyl-sn-glycero-3-phospho-(1D-myo-inositol-3-phosphate): asparagine 377, asparagine 402, and isoleucine 403. Residue cysteine 463 is the Phosphocysteine intermediate of the active site. 8 residues coordinate a 1,2-diacyl-sn-glycero-3-phospho-(1D-myo-inositol-3,5-bisphosphate): serine 464, aspartate 465, glycine 466, tryptophan 467, aspartate 468, arginine 469, lysine 505, and arginine 509. A 1,2-diacyl-sn-glycero-3-phospho-(1D-myo-inositol-3-phosphate) contacts are provided by serine 464, aspartate 465, glycine 466, tryptophan 467, aspartate 468, and arginine 469. Arginine 509 provides a ligand contact to a 1,2-diacyl-sn-glycero-3-phospho-(1D-myo-inositol-3-phosphate). Residues 641–705 (FSPKEERPLS…PSDNTNSLPM (65 aa)) are disordered. Residues 651 to 705 (GCTTPMNTSTSTNLVKSKSSESINSLNVDGSAKESSQQHPTCSTTPSDNTNSLPM) are compositionally biased toward polar residues. The segment at 818-883 (EGESGHCAYC…ACDSCYDSMH (66 aa)) adopts an FYVE-type zinc-finger fold. Zn(2+) contacts are provided by cysteine 824, cysteine 827, cysteine 845, cysteine 848, cysteine 853, cysteine 856, cysteine 875, and cysteine 878. The segment at 886-1006 (DLKLSSSSTT…DVLDVNEQPL (121 aa)) is disordered. Composition is skewed to low complexity over residues 890–901 (SSSSTTTTSSST) and 913–926 (DNNSDNVSENVSEN). Composition is skewed to basic and acidic residues over residues 933–954 (VEEKEAEDPIKEAESPSKETKC) and 976–985 (HSRDPLKSID).

It belongs to the protein-tyrosine phosphatase family. Non-receptor class myotubularin subfamily. As to expression, expressed in the body wall muscle and in eggs. Expressed in head neurons. Expressed in the intestine. Expressed in pharyngeal cells, vulval muscle cells and cells of the tail region.

It is found in the cytoplasm. It localises to the membrane. The enzyme catalyses a 1,2-diacyl-sn-glycero-3-phospho-(1D-myo-inositol-3,5-bisphosphate) + H2O = a 1,2-diacyl-sn-glycero-3-phospho-(1D-myo-inositol-5-phosphate) + phosphate. It catalyses the reaction a 1,2-diacyl-sn-glycero-3-phospho-(1D-myo-inositol-3-phosphate) + H2O = a 1,2-diacyl-sn-glycero-3-phospho-(1D-myo-inositol) + phosphate. It carries out the reaction 1,2-dihexadecanoyl-sn-glycero-3-phospho-(1D-myo-inositol-3-phosphate) + H2O = 1,2-dihexadecanoyl-sn-glycero-3-phospho-(1D-myo-inositol) + phosphate. The catalysed reaction is 1,2-dihexadecanoyl-sn-glycero-3-phospho-(1D-myo-inositol-3,5-phosphate) + H2O = 1,2-dihexadecanoyl-sn-glycero-3-phospho-(1D-myo-inositol-5-phosphate) + phosphate. The enzyme catalyses 1,2-dioctanoyl-sn-glycero-3-phospho-(1-D-myo-inositol-3-phosphate) + H2O = 1,2-dioctanoyl-sn-glycero-3-phospho-(1D-myo-inositol) + phosphate. Its activity is regulated as follows. Inhibited by sodium vanadate and peroxide. Preferentially dephosphorylates phosphatidylinositol 3-phosphate (PI3P), and has some activity towards phosphatidylinositol 3,5-bisphosphate (PI35P). Positively regulates autophagy and is recruited to autophagosomes by PI3P where it catalyzes PI3P turnover to promote autophagosome maturation. Thought to have a role in maintenance of muscle function. Involved in locomotion and lifespan determination. This is Phosphatidylinositol-3,5-bisphosphate 3-phosphatase MTMR3 from Caenorhabditis elegans.